Consider the following 350-residue polypeptide: Biotin synthase (350 aa).

One can recognise a Radical SAM core domain in the interval 38–265 (NHVQVSTLLS…MSAVRLSAGR (228 aa)). Residues Cys53, Cys57, and Cys60 each coordinate [4Fe-4S] cluster. 4 residues coordinate [2Fe-2S] cluster: Cys97, Cys128, Cys188, and Arg260.

Belongs to the radical SAM superfamily. Biotin synthase family. In terms of assembly, homodimer. It depends on [4Fe-4S] cluster as a cofactor. The cofactor is [2Fe-2S] cluster.

The catalysed reaction is (4R,5S)-dethiobiotin + (sulfur carrier)-SH + 2 reduced [2Fe-2S]-[ferredoxin] + 2 S-adenosyl-L-methionine = (sulfur carrier)-H + biotin + 2 5'-deoxyadenosine + 2 L-methionine + 2 oxidized [2Fe-2S]-[ferredoxin]. The protein operates within cofactor biosynthesis; biotin biosynthesis; biotin from 7,8-diaminononanoate: step 2/2. Its function is as follows. Catalyzes the conversion of dethiobiotin (DTB) to biotin by the insertion of a sulfur atom into dethiobiotin via a radical-based mechanism. The sequence is that of Biotin synthase from Vibrio atlanticus (strain LGP32) (Vibrio splendidus (strain Mel32)).